A 192-amino-acid chain; its full sequence is Cytochrome c4 (192 aa).

Cytochrome c domains follow at residues 12–90 (GDPQ…ATQP) and 99–191 (ELAS…QGLS). Heme c contacts are provided by Cys-25, Cys-28, His-29, Cys-120, Cys-123, and His-124.

Post-translationally, binds 2 heme c groups covalently per subunit.

The protein resides in the periplasm. In terms of biological role, diheme, high potential cytochrome c believed to be an intermediate electron donor in an anaerobic electron transport chain. This Thiocapsa roseopersicina protein is Cytochrome c4.